A 118-amino-acid polypeptide reads, in one-letter code: Small ribosomal subunit protein uS13 (118 aa).

The disordered stretch occupies residues 94–118 (SLPLRGQRTKTNARTRKGPRKPIRK).

The protein belongs to the universal ribosomal protein uS13 family. In terms of assembly, part of the 30S ribosomal subunit. Forms a loose heterodimer with protein S19. Forms two bridges to the 50S subunit in the 70S ribosome.

Its function is as follows. Located at the top of the head of the 30S subunit, it contacts several helices of the 16S rRNA. In the 70S ribosome it contacts the 23S rRNA (bridge B1a) and protein L5 of the 50S subunit (bridge B1b), connecting the 2 subunits; these bridges are implicated in subunit movement. Contacts the tRNAs in the A and P-sites. This is Small ribosomal subunit protein uS13 from Shewanella sp. (strain W3-18-1).